Here is a 350-residue protein sequence, read N- to C-terminus: Holliday junction branch migration complex subunit RuvB (350 aa).

The tract at residues 1-22 (MDHTASLSPVRPEAQPTDDRER) is disordered. The tract at residues 1–185 (MDHTASLSPV…FGIVERFEFY (185 aa)) is large ATPase domain (RuvB-L). ATP-binding positions include Leu-24, Arg-25, Gly-66, Lys-69, Thr-70, Thr-71, 132 to 134 (EDY), Arg-175, Tyr-185, and Arg-222. Thr-70 lines the Mg(2+) pocket. A small ATPAse domain (RuvB-S) region spans residues 186–256 (TPEELAAIVQ…IVRAGLAHLK (71 aa)). The tract at residues 259–350 (ELGLELHDIQ…PHSPEQGTLL (92 aa)) is head domain (RuvB-H). Arg-314 and Arg-319 together coordinate DNA.

The protein belongs to the RuvB family. Homohexamer. Forms an RuvA(8)-RuvB(12)-Holliday junction (HJ) complex. HJ DNA is sandwiched between 2 RuvA tetramers; dsDNA enters through RuvA and exits via RuvB. An RuvB hexamer assembles on each DNA strand where it exits the tetramer. Each RuvB hexamer is contacted by two RuvA subunits (via domain III) on 2 adjacent RuvB subunits; this complex drives branch migration. In the full resolvosome a probable DNA-RuvA(4)-RuvB(12)-RuvC(2) complex forms which resolves the HJ.

It localises to the cytoplasm. The enzyme catalyses ATP + H2O = ADP + phosphate + H(+). In terms of biological role, the RuvA-RuvB-RuvC complex processes Holliday junction (HJ) DNA during genetic recombination and DNA repair, while the RuvA-RuvB complex plays an important role in the rescue of blocked DNA replication forks via replication fork reversal (RFR). RuvA specifically binds to HJ cruciform DNA, conferring on it an open structure. The RuvB hexamer acts as an ATP-dependent pump, pulling dsDNA into and through the RuvAB complex. RuvB forms 2 homohexamers on either side of HJ DNA bound by 1 or 2 RuvA tetramers; 4 subunits per hexamer contact DNA at a time. Coordinated motions by a converter formed by DNA-disengaged RuvB subunits stimulates ATP hydrolysis and nucleotide exchange. Immobilization of the converter enables RuvB to convert the ATP-contained energy into a lever motion, pulling 2 nucleotides of DNA out of the RuvA tetramer per ATP hydrolyzed, thus driving DNA branch migration. The RuvB motors rotate together with the DNA substrate, which together with the progressing nucleotide cycle form the mechanistic basis for DNA recombination by continuous HJ branch migration. Branch migration allows RuvC to scan DNA until it finds its consensus sequence, where it cleaves and resolves cruciform DNA. In Treponema pallidum (strain Nichols), this protein is Holliday junction branch migration complex subunit RuvB.